The sequence spans 285 residues: 4-hydroxybenzoate octaprenyltransferase (285 aa).

The next 9 helical transmembrane spans lie at 19–39 (IGSL…ADGL), 42–62 (WHVL…GCVI), 82–102 (LPSG…LVVC), 104–124 (FLLV…GIVL), 136–156 (YLPQ…AYAA), 166–186 (WLLF…YAMV), 210–230 (IIGL…SQLA), 233–253 (GIYY…QWLI), and 265–285 (FLNN…SVLI).

The protein belongs to the UbiA prenyltransferase family. Mg(2+) serves as cofactor.

It is found in the cell inner membrane. The enzyme catalyses all-trans-octaprenyl diphosphate + 4-hydroxybenzoate = 4-hydroxy-3-(all-trans-octaprenyl)benzoate + diphosphate. It functions in the pathway cofactor biosynthesis; ubiquinone biosynthesis. Functionally, catalyzes the prenylation of para-hydroxybenzoate (PHB) with an all-trans polyprenyl group. Mediates the second step in the final reaction sequence of ubiquinone-8 (UQ-8) biosynthesis, which is the condensation of the polyisoprenoid side chain with PHB, generating the first membrane-bound Q intermediate 3-octaprenyl-4-hydroxybenzoate. The chain is 4-hydroxybenzoate octaprenyltransferase from Aliivibrio fischeri (strain ATCC 700601 / ES114) (Vibrio fischeri).